A 355-amino-acid chain; its full sequence is Peptide chain release factor 1 (355 aa).

Residue glutamine 233 is modified to N5-methylglutamine. Basic and acidic residues predominate over residues 280–293 (KRRQKEQERSDSRR). The disordered stretch occupies residues 280-310 (KRRQKEQERSDSRRGQVGSGDRSERIRTYNF).

It belongs to the prokaryotic/mitochondrial release factor family. Methylated by PrmC. Methylation increases the termination efficiency of RF1.

Its subcellular location is the cytoplasm. In terms of biological role, peptide chain release factor 1 directs the termination of translation in response to the peptide chain termination codons UAG and UAA. The sequence is that of Peptide chain release factor 1 (prfA) from Rickettsia prowazekii (strain Madrid E).